The following is an 832-amino-acid chain: DEAD-box ATP-dependent RNA helicase 13 (832 aa).

Over residues Met-1–Gln-12 the composition is skewed to pro residues. Disordered regions lie at residues Met-1 to Glu-59 and Val-91 to Val-173. Positions Arg-29 to Arg-42 are enriched in basic residues. Positions Ala-43–Gly-55 are enriched in low complexity. The span at Gln-105–Lys-114 shows a compositional bias: basic residues. Over residues Leu-128–Glu-137 the composition is skewed to acidic residues. A compositionally biased stretch (basic residues) spans Lys-141–Val-155. A compositionally biased stretch (basic and acidic residues) spans Lys-156–Asp-167. The Q motif motif lies at Tyr-198–Lys-226. The Helicase ATP-binding domain occupies Pro-230 to Lys-447. Ala-243 to Thr-250 contacts ATP. The DEAD box signature appears at Asp-371–Asp-374. Residues Lys-484–Pro-645 enclose the Helicase C-terminal domain. The disordered stretch occupies residues Arg-800–Asp-832. A compositionally biased stretch (basic and acidic residues) spans Lys-814–Asp-832.

Belongs to the DEAD box helicase family. DDX24/MAK5 subfamily.

It catalyses the reaction ATP + H2O = ADP + phosphate + H(+). The protein is DEAD-box ATP-dependent RNA helicase 13 of Oryza sativa subsp. japonica (Rice).